A 319-amino-acid chain; its full sequence is tRNA (guanine-N(7)-)-methyltransferase (319 aa).

Residues E28, E51, and D75 each coordinate S-adenosyl-L-methionine. Substrate is bound by residues D134 and 167–170 (TKYE).

It belongs to the class I-like SAM-binding methyltransferase superfamily. TrmB family.

The catalysed reaction is guanosine(46) in tRNA + S-adenosyl-L-methionine = N(7)-methylguanosine(46) in tRNA + S-adenosyl-L-homocysteine. It functions in the pathway tRNA modification; N(7)-methylguanine-tRNA biosynthesis. In terms of biological role, catalyzes the formation of N(7)-methylguanine at position 46 (m7G46) in tRNA. The polypeptide is tRNA (guanine-N(7)-)-methyltransferase (Coprothermobacter proteolyticus (strain ATCC 35245 / DSM 5265 / OCM 4 / BT)).